An 80-amino-acid chain; its full sequence is RNA-binding protein KhpA (80 aa).

Residues 33–80 form the KH domain; sequence GRTVEVHVHPDDLGKVIGRGGRTATALRKLVAGIGGRGIRVDVVDTDQ.

This sequence belongs to the KhpA RNA-binding protein family.

Its subcellular location is the cytoplasm. Functionally, a probable RNA-binding protein. The chain is RNA-binding protein KhpA from Mycobacterium leprae (strain TN).